The chain runs to 743 residues: Elongation factor 2 (743 aa).

One can recognise a tr-type G domain in the interval 19–265; it reads NNIRNIGIIA…MVVRHLPSPK (247 aa). Residues 28–35, 94–98, and 148–151 each bind GTP; these read AHIHHGKT, DTPGH, and NKVD. H615 is subject to Diphthamide.

This sequence belongs to the TRAFAC class translation factor GTPase superfamily. Classic translation factor GTPase family. EF-G/EF-2 subfamily.

It localises to the cytoplasm. Catalyzes the GTP-dependent ribosomal translocation step during translation elongation. During this step, the ribosome changes from the pre-translocational (PRE) to the post-translocational (POST) state as the newly formed A-site-bound peptidyl-tRNA and P-site-bound deacylated tRNA move to the P and E sites, respectively. Catalyzes the coordinated movement of the two tRNA molecules, the mRNA and conformational changes in the ribosome. This is Elongation factor 2 from Nanoarchaeum equitans (strain Kin4-M).